We begin with the raw amino-acid sequence, 836 residues long: Tuftelin-interacting protein 11 (836 aa).

Residues 1 to 13 (MSLSHLYRDGEGH) show a composition bias toward basic and acidic residues. Disordered regions lie at residues 1–31 (MSLS…DWDL), 54–73 (WAER…RARD), and 85–136 (LKKG…AGGT). A required for interaction with DHX15 region spans residues 1-50 (MSLSHLYRDGEGHMDDDEDERENFEITDWDLQNEFNPNRQRHWQTKEEAT). Phosphoserine is present on S2. The segment covering 14 to 28 (MDDDEDERENFEITD) has biased composition (acidic residues). A compositionally biased stretch (basic and acidic residues) spans 54–64 (WAERDSDEERP). A phosphoserine mark is found at S59 and S98. Residues 91–102 (EEAELEDSDDEE) show a composition bias toward acidic residues. Basic and acidic residues predominate over residues 103–116 (KPVKQDEFPKDFGP). S144 is subject to Phosphoserine. Positions 149 to 195 (TKGIGQKLLQKMGYVPGRGLGKNAQGIINPIEAKQRKGKGAVGAYGS) constitute a G-patch domain. The disordered stretch occupies residues 183 to 236 (QRKGKGAVGAYGSERTTQSLQDFPVVDSEEEAEEEFQKELSQWRKDPSGSKKKP). S210 carries the post-translational modification Phosphoserine. The span at 217-231 (EFQKELSQWRKDPSG) shows a compositional bias: basic and acidic residues. Positions 699–704 (VKDKFN) match the Nuclear localization signal motif. The segment at 709–733 (IMNRAVSSNVGAYMQPGARENIAYL) is required for nuclear speckle localization.

It belongs to the TFP11/STIP family. In terms of assembly, identified in the spliceosome C complex. Found in the Intron Large (IL) complex, a post-mRNA release spliceosomal complex containing the excised intron, U2, U5 and U6 snRNPs, and splicing factors. Interacts with TUFT1. Interacts with DHX15; indicative for a recruitment of DHX15 to the IL complex. Interacts with GCFC2.

The protein resides in the cytoplasm. The protein localises to the nucleus. Its function is as follows. Involved in pre-mRNA splicing, specifically in spliceosome disassembly during late-stage splicing events. Intron turnover seems to proceed through reactions in two lariat-intron associated complexes termed Intron Large (IL) and Intron Small (IS). In cooperation with DHX15 seems to mediate the transition of the U2, U5 and U6 snRNP-containing IL complex to the snRNP-free IS complex leading to efficient debranching and turnover of excised introns. May play a role in the differentiation of ameloblasts and odontoblasts or in the forming of the enamel extracellular matrix. This chain is Tuftelin-interacting protein 11 (TFIP11), found in Sus scrofa (Pig).